The following is a 976-amino-acid chain: Apical junction component 1 homolog (976 aa).

Residues 21-49 are disordered; the sequence is ATPGPASKCSPCERSVARPAEPAPFNKRH. Serine 52 is modified (phosphoserine). Disordered stretches follow at residues 61-136, 220-242, and 264-294; these read GPAM…EPAY, PQFHGLTVPGPRHMALSRTPTPS, and YAERRSLPFTTPPGPTQFFYTEEPQGFRGSF. Over residues 98 to 113 the composition is skewed to pro residues; the sequence is RAPPGLTPAPASPPVL. Residues 116–134 show a composition bias toward basic and acidic residues; it reads RGREAQRAARAEASPRREP. Serine 129 carries the phosphoserine modification. Arginine 322 is modified (omega-N-methylarginine). The interval 412-443 is disordered; it reads LQVVPPSDPDPLLASWHGGTGTSPPRLATDSR. A phosphoserine mark is found at serine 468, serine 509, and serine 512. Disordered regions lie at residues 539 to 574 and 614 to 660; these read DLRATERPSARAWELPGGRTRPPPHAAPDGPTSGRQ and LDSR…ADED. 2 stretches are compositionally biased toward low complexity: residues 616–625 and 633–655; these read SRPAGSGAPA and PASAGSAEEPAAPGEAADASPEP. Position 749 is an asymmetric dimethylarginine; alternate (arginine 749). The residue at position 749 (arginine 749) is an Omega-N-methylarginine; alternate. Residues 855-888 are disordered; that stretch reads GSPARPPPARSREPDMETLILTPPPGTAGLDQDG.

The protein resides in the apical cell membrane. It is found in the cell projection. It localises to the cilium. Its subcellular location is the cell junction. The protein localises to the adherens junction. Its function is as follows. May be involved in the control of adherens junction integrity. In Homo sapiens (Human), this protein is Apical junction component 1 homolog.